Here is a 373-residue protein sequence, read N- to C-terminus: Anhydro-N-acetylmuramic acid kinase (373 aa).

13-20 lines the ATP pocket; that stretch reads GTSMDGID.

This sequence belongs to the anhydro-N-acetylmuramic acid kinase family.

It catalyses the reaction 1,6-anhydro-N-acetyl-beta-muramate + ATP + H2O = N-acetyl-D-muramate 6-phosphate + ADP + H(+). Its pathway is amino-sugar metabolism; 1,6-anhydro-N-acetylmuramate degradation. It functions in the pathway cell wall biogenesis; peptidoglycan recycling. Functionally, catalyzes the specific phosphorylation of 1,6-anhydro-N-acetylmuramic acid (anhMurNAc) with the simultaneous cleavage of the 1,6-anhydro ring, generating MurNAc-6-P. Is required for the utilization of anhMurNAc either imported from the medium or derived from its own cell wall murein, and thus plays a role in cell wall recycling. The chain is Anhydro-N-acetylmuramic acid kinase from Agrobacterium fabrum (strain C58 / ATCC 33970) (Agrobacterium tumefaciens (strain C58)).